A 558-amino-acid chain; its full sequence is Hepatocyte nuclear factor 1-beta (558 aa).

Positions 1–31 (MVSKLTSLQQELLSALLSSGVTKEVLIQALE) are dimerization. One can recognise an HNF-p1 domain in the interval 1–32 (MVSKLTSLQQELLSALLSSGVTKEVLIQALEE). Phosphoserine is present on residues S49, S52, S75, and S80. The disordered stretch occupies residues 66–85 (TNGHAKGRLSGDEGSEDGDD). The POU-specific atypical domain occupies 93–188 (KELQALNTEE…ILRQFNQTVQ (96 aa)). Positions 231 to 311 (MRRNRFKWGP…NRRKEEAFRQ (81 aa)) form a DNA-binding region, homeobox; HNF1-type. A disordered region spans residues 323–348 (THNLNPLLTHGSPHHQPSSSPPNKMS).

Belongs to the HNF1 homeobox family. As to quaternary structure, binds DNA as a dimer. Can form homodimer or heterodimer with HNF1-alpha. Interacts (via HNF-p1 domain) with PCBD1; the interaction increases its transactivation activity.

It is found in the nucleus. Its function is as follows. Transcription factor that binds to the inverted palindrome 5'-GTTAATNATTAAC-3'. Binds to the FPC element in the cAMP regulatory unit of the PLAU gene. Transcriptional activity is increased by coactivator PCBD1. In Mus musculus (Mouse), this protein is Hepatocyte nuclear factor 1-beta (Hnf1b).